Consider the following 225-residue polypeptide: Orotate phosphoribosyltransferase (225 aa).

K31 contributes to the 5-phospho-alpha-D-ribose 1-diphosphate binding site. Position 39–40 (39–40 (FF)) interacts with orotate. 5-phospho-alpha-D-ribose 1-diphosphate contacts are provided by residues 78 to 79 (YK), R105, K106, K109, H111, and 130 to 138 (DDVLTSGKA). 2 residues coordinate orotate: T134 and R163.

Belongs to the purine/pyrimidine phosphoribosyltransferase family. PyrE subfamily. As to quaternary structure, homodimer.

It catalyses the reaction orotidine 5'-phosphate + diphosphate = orotate + 5-phospho-alpha-D-ribose 1-diphosphate. It participates in pyrimidine metabolism; UMP biosynthesis via de novo pathway; UMP from orotate: step 1/2. Functionally, catalyzes the transfer of a ribosyl phosphate group from 5-phosphoribose 1-diphosphate to orotate, leading to the formation of orotidine monophosphate (OMP). This is Orotate phosphoribosyltransferase (URA5) from Cryptococcus neoformans var. neoformans serotype D (strain B-3501A) (Filobasidiella neoformans).